A 158-amino-acid chain; its full sequence is MIILGIDPGLARVGYGLIDCNMTQKKMLDCGIIKTSQDHNDGERMVEITRDLRYLINKWKPQIASVEKFFFYRSSTTIKVVQARGVVIMTLARFRVPILEFPPMQIKLAVTGSGKANKDEVSMAVIRELDLSKPPRPDDASDALAIALTAYYQQRIVK.

Active-site residues include Asp7, Glu67, and Asp139. Positions 7, 67, and 139 each coordinate Mg(2+).

This sequence belongs to the RuvC family. Homodimer which binds Holliday junction (HJ) DNA. The HJ becomes 2-fold symmetrical on binding to RuvC with unstacked arms; it has a different conformation from HJ DNA in complex with RuvA. In the full resolvosome a probable DNA-RuvA(4)-RuvB(12)-RuvC(2) complex forms which resolves the HJ. Mg(2+) serves as cofactor.

The protein localises to the cytoplasm. It carries out the reaction Endonucleolytic cleavage at a junction such as a reciprocal single-stranded crossover between two homologous DNA duplexes (Holliday junction).. The RuvA-RuvB-RuvC complex processes Holliday junction (HJ) DNA during genetic recombination and DNA repair. Endonuclease that resolves HJ intermediates. Cleaves cruciform DNA by making single-stranded nicks across the HJ at symmetrical positions within the homologous arms, yielding a 5'-phosphate and a 3'-hydroxyl group; requires a central core of homology in the junction. The consensus cleavage sequence is 5'-(A/T)TT(C/G)-3'. Cleavage occurs on the 3'-side of the TT dinucleotide at the point of strand exchange. HJ branch migration catalyzed by RuvA-RuvB allows RuvC to scan DNA until it finds its consensus sequence, where it cleaves and resolves the cruciform DNA. This chain is Crossover junction endodeoxyribonuclease RuvC, found in Prochlorococcus marinus (strain MIT 9211).